Consider the following 582-residue polypeptide: Glutaredoxin domain-containing cysteine-rich protein CG12206 (582 aa).

A compositionally biased stretch (polar residues) spans 217 to 227 (CETLDSGTGSD). Disordered regions lie at residues 217–244 (CETL…VRSP) and 260–300 (EADH…SCDS). Low complexity predominate over residues 291–300 (SSNSSLSCDS). Positions 423-528 (NVKNYMEKDV…QLLRPYKSIA (106 aa)) constitute a Glutaredoxin domain.

The protein belongs to the GRXCR1 family.

In Drosophila melanogaster (Fruit fly), this protein is Glutaredoxin domain-containing cysteine-rich protein CG12206.